A 296-amino-acid chain; its full sequence is Protoheme IX farnesyltransferase (296 aa).

Helical transmembrane passes span 29–49, 54–74, 98–118, 121–141, 147–167, 175–195, 221–241, 246–266, and 275–295; these read LSGL…GHVA, ALTV…NCWM, FTAL…LALV, PLTA…YTPM, LALL…WTAA, GLAL…AVSI, WIAA…PLRV, YGAV…AGVG, and NFFL…FLGA.

It belongs to the UbiA prenyltransferase family. Protoheme IX farnesyltransferase subfamily.

The protein localises to the cell inner membrane. It catalyses the reaction heme b + (2E,6E)-farnesyl diphosphate + H2O = Fe(II)-heme o + diphosphate. It participates in porphyrin-containing compound metabolism; heme O biosynthesis; heme O from protoheme: step 1/1. Its function is as follows. Converts heme B (protoheme IX) to heme O by substitution of the vinyl group on carbon 2 of heme B porphyrin ring with a hydroxyethyl farnesyl side group. This is Protoheme IX farnesyltransferase from Anaeromyxobacter sp. (strain Fw109-5).